The primary structure comprises 375 residues: ELAV-like protein 2 (375 aa).

3 RRM domains span residues 67–145 (TNLI…YARP), 153–233 (ANLY…FANN), and 292–370 (WCIF…FKTS).

The protein belongs to the RRM elav family. As to quaternary structure, part of a ribonucleoprotein (RNP) complex, at least composed of elavl1/elrA and/or elavl2/elrB, igf2bp3/vg1RBP, ddx6/Xp54, ybx2/frgy2, lsm14b/rap55b and, in a subset of RNP complexes, stau1/staufen. Binds RNA as a homooligomer.

It is found in the cytoplasm. It localises to the cell cortex. Functionally, binds to poly-U elements and AU-rich elements (AREs) in the 3'-UTR of target mRNAs. Required for the vegetal localization of vg1 mRNA. Probably required for nervous system development. In Xenopus tropicalis (Western clawed frog), this protein is ELAV-like protein 2.